Here is a 278-residue protein sequence, read N- to C-terminus: Ribosomal protein L11 methyltransferase (278 aa).

S-adenosyl-L-methionine contacts are provided by T131, G152, D173, and N214.

It belongs to the methyltransferase superfamily. PrmA family.

The protein localises to the cytoplasm. The catalysed reaction is L-lysyl-[protein] + 3 S-adenosyl-L-methionine = N(6),N(6),N(6)-trimethyl-L-lysyl-[protein] + 3 S-adenosyl-L-homocysteine + 3 H(+). Its function is as follows. Methylates ribosomal protein L11. In Campylobacter lari (strain RM2100 / D67 / ATCC BAA-1060), this protein is Ribosomal protein L11 methyltransferase.